The primary structure comprises 543 residues: Chaperonin GroEL (543 aa).

ATP contacts are provided by residues 29–32 (TIGP), 86–90 (DGTTT), Gly-413, 478–480 (NAA), and Asp-494.

Belongs to the chaperonin (HSP60) family. As to quaternary structure, forms a cylinder of 14 subunits composed of two heptameric rings stacked back-to-back. Interacts with the co-chaperonin GroES.

The protein resides in the cytoplasm. The enzyme catalyses ATP + H2O + a folded polypeptide = ADP + phosphate + an unfolded polypeptide.. Together with its co-chaperonin GroES, plays an essential role in assisting protein folding. The GroEL-GroES system forms a nano-cage that allows encapsulation of the non-native substrate proteins and provides a physical environment optimized to promote and accelerate protein folding. In Limosilactobacillus fermentum (strain NBRC 3956 / LMG 18251) (Lactobacillus fermentum), this protein is Chaperonin GroEL.